A 473-amino-acid chain; its full sequence is UDP-N-acetylmuramate--L-alanine ligase (473 aa).

Residue 119-125 (GTHGKTT) participates in ATP binding.

This sequence belongs to the MurCDEF family.

Its subcellular location is the cytoplasm. The catalysed reaction is UDP-N-acetyl-alpha-D-muramate + L-alanine + ATP = UDP-N-acetyl-alpha-D-muramoyl-L-alanine + ADP + phosphate + H(+). The protein operates within cell wall biogenesis; peptidoglycan biosynthesis. Cell wall formation. The protein is UDP-N-acetylmuramate--L-alanine ligase of Caulobacter vibrioides (strain NA1000 / CB15N) (Caulobacter crescentus).